Consider the following 355-residue polypeptide: DNA-binding protein RHL1 (355 aa).

Disordered stretches follow at residues 1 to 26 (MVRA…KQRK), 181 to 215 (DFQG…VDNE), and 229 to 355 (IQVT…SSKA). The span at 14 to 23 (GGDKDDAESK) shows a compositional bias: basic and acidic residues. Low complexity-rich tracts occupy residues 230–246 (QVTP…VTPV) and 260–274 (AETS…SEGN). Basic and acidic residues-rich tracts occupy residues 281 to 296 (KPLL…REES) and 309 to 326 (LPEE…KDSK). Residues 344–355 (AGTSKAKSSSKA) show a composition bias toward low complexity.

Interacts with BIN4 and TOP6A, but not with TOP6B. As to expression, expressed inproliferating and endoreduplicating cells.

It localises to the nucleus. Component of the DNA topoisomerase VI complex involved in chromatin organization and progression of endoreduplication cycles. Binds to DNA. Required for endoreduplication beyond 8C. The protein is DNA-binding protein RHL1 (RHL1) of Arabidopsis thaliana (Mouse-ear cress).